Reading from the N-terminus, the 808-residue chain is Probable ATP-dependent helicase MJ1401 (808 aa).

Residues 189 to 217 carry the Q motif motif; that stretch reads YKIDELDIPEELKEIIKSRGIEELLPVQT. A Helicase ATP-binding domain is found at 221–391; that stretch reads KAGLLNGDDL…QLNAKLVLYN (171 aa). Residue 234 to 241 participates in ATP binding; it reads SATSSGKT. The DEIH box motif lies at 336–339; that stretch reads DEIH. Residues 396 to 585 form the Helicase C-terminal domain; it reads PLERHIIFCK…EDEEEEQILA (190 aa).

It belongs to the DEAD box helicase family.

The polypeptide is Probable ATP-dependent helicase MJ1401 (Methanocaldococcus jannaschii (strain ATCC 43067 / DSM 2661 / JAL-1 / JCM 10045 / NBRC 100440) (Methanococcus jannaschii)).